Here is a 462-residue protein sequence, read N- to C-terminus: Elongation factor 1-alpha 1 (462 aa).

Gly-2 is modified (n,N,N-trimethylglycine). The tr-type G domain occupies 5–242 (KTHINIVVIG…DCILPPTRPT (238 aa)). Residues 14–21 (GHVDSGKS) are G1. 14–21 (GHVDSGKS) is a binding site for GTP. Lys-36 carries the N6,N6,N6-trimethyllysine; alternate modification. Lys-36 carries the post-translational modification N6,N6-dimethyllysine; alternate. Lys-36 carries the N6-methyllysine; alternate modification. Lys-55 bears the N6,N6-dimethyllysine mark. A G2 region spans residues 70 to 74 (GITID). Lys-79 carries the post-translational modification N6,N6,N6-trimethyllysine; by EEF1AKMT1. Residues 91-94 (DAPG) form a G3 region. 153 to 156 (NKMD) contacts GTP. The tract at residues 153-156 (NKMD) is G4. Lys-165 bears the N6,N6,N6-trimethyllysine; alternate; by EEF1AKMT3 mark. Lys-165 is modified (N6,N6-dimethyllysine; alternate; by EEF1AKMT3). Lys-165 bears the N6-acetyllysine; alternate mark. Position 165 is an N6-methyllysine; alternate; by EEF1AKMT3 (Lys-165). Residue Lys-172 is modified to N6-acetyllysine. 194 to 196 (SGW) contacts GTP. Residues 194–196 (SGW) are G5. N6-acetyllysine is present on Lys-273. The residue at position 300 (Ser-300) is a Phosphoserine; by TGFBR1. Glu-301 carries the post-translational modification 5-glutamyl glycerylphosphorylethanolamine. At Lys-318 the chain carries N6,N6,N6-trimethyllysine; by EEF1AKMT2. At Glu-374 the chain carries 5-glutamyl glycerylphosphorylethanolamine. A Glycyl lysine isopeptide (Lys-Gly) (interchain with G-Cter in ubiquitin) cross-link involves residue Lys-385. Lys-392 is modified (N6-acetyllysine; alternate). Lys-392 bears the N6-succinyllysine; alternate mark. Phosphothreonine; by PASK is present on Thr-432. An N6-acetyllysine modification is found at Lys-439.

This sequence belongs to the TRAFAC class translation factor GTPase superfamily. Classic translation factor GTPase family. EF-Tu/EF-1A subfamily. Found in a nuclear export complex with XPO5, EEF1A1, Ran and aminoacylated tRNA. Interacts with PARP1 and TXK. Interacts with KARS1. May interact with ERGIC2. Interacts with IFIT1 (via TPR repeats 4-7). Interacts with DLC1, facilitating distribution to the membrane periphery and ruffles upon growth factor stimulation. Interacts with ZPR1; the interaction occurs in a epidermal growth factor (EGF)-dependent manner. Interacts with PPP1R16B. Interacts with SPHK1 and SPHK2; both interactions increase SPHK1 and SPHK2 kinase activity. Interacts with guanyl-nucleotide exchange factor EEF1B2. Interacts (via middle-region) with HTATIP2 (via N-terminus); the interaction is direct and competes with EEF1A1 binding to guanyl-nucleotide exchange factor EEF1B2, thereby inhibiting GDP for GTP exchange and reactivation of EEF1A1. Interacts with tRNA. ISGylated. Post-translationally, phosphorylated by TXK. Phosphorylation by PASK increases translation efficiency. Phosphorylated by ROCK2. Phosphorylation by TGFBR1 inhibits translation elongation. In terms of processing, trimethylated at Lys-79 by EEF1AKMT1. Methylated at Lys-165 by EEF1AKMT3, methylation by EEF1AKMT3 is dynamic as well as inducible by stress conditions, such as ER-stress, and plays a regulatory role on mRNA translation. Trimethylated at Lys-318 by EEF1AKMT2. Mono-, di-, and trimethylated at Lys-36 by EEF1AKMT4; trimethylated form is predominant. Methylation by EEF1AKMT4 contributes to the fine-tuning of translation rates for a subset of tRNAs. Trimethylated at Gly-2 by METTL13. Mono- and dimethylated at Lys-55 by METTL13; dimethylated form is predominant. Ubiquitinated at Lys-385 by RNF14 in response to ribosome collisions (ribosome stalling), leading to its degradation by the proteasome and rescue of stalled ribosomes.

It is found in the cytoplasm. The protein resides in the nucleus. Its subcellular location is the nucleolus. It localises to the cell membrane. The enzyme catalyses GTP + H2O = GDP + phosphate + H(+). Functionally, translation elongation factor that catalyzes the GTP-dependent binding of aminoacyl-tRNA (aa-tRNA) to the A-site of ribosomes during the elongation phase of protein synthesis. Base pairing between the mRNA codon and the aa-tRNA anticodon promotes GTP hydrolysis, releasing the aa-tRNA from EEF1A1 and allowing its accommodation into the ribosome. The growing protein chain is subsequently transferred from the P-site peptidyl tRNA to the A-site aa-tRNA, extending it by one amino acid through ribosome-catalyzed peptide bond formation. Also plays a role in the positive regulation of IFNG transcription in T-helper 1 cells as part of an IFNG promoter-binding complex with TXK and PARP1. Also plays a role in cytoskeleton organization by promoting actin bundling. The polypeptide is Elongation factor 1-alpha 1 (EEF1A1) (Bos taurus (Bovine)).